The following is a 544-amino-acid chain: Probable protein kinase UbiB (544 aa).

The region spanning 123-501 is the Protein kinase domain; it reads EFDIKPLASA…KRQQATGKFL (379 aa). Residues 129 to 137 and K152 each bind ATP; that span reads LASASIAQV. D287 serves as the catalytic Proton acceptor. 2 helical membrane-spanning segments follow: residues 496-516 and 519-539; these read ATGK…AILV and AYEQ…LLSW.

Belongs to the ABC1 family. UbiB subfamily.

Its subcellular location is the cell inner membrane. Its pathway is cofactor biosynthesis; ubiquinone biosynthesis [regulation]. In terms of biological role, is probably a protein kinase regulator of UbiI activity which is involved in aerobic coenzyme Q (ubiquinone) biosynthesis. The chain is Probable protein kinase UbiB from Vibrio parahaemolyticus serotype O3:K6 (strain RIMD 2210633).